The following is a 77-amino-acid chain: Large ribosomal subunit protein bL28 (77 aa).

This sequence belongs to the bacterial ribosomal protein bL28 family.

This chain is Large ribosomal subunit protein bL28, found in Variovorax paradoxus (strain S110).